The sequence spans 308 residues: Elongation factor Ts (308 aa).

Positions 80–83 are involved in Mg(2+) ion dislocation from EF-Tu; that stretch reads TDFV.

The protein belongs to the EF-Ts family.

The protein localises to the cytoplasm. Functionally, associates with the EF-Tu.GDP complex and induces the exchange of GDP to GTP. It remains bound to the aminoacyl-tRNA.EF-Tu.GTP complex up to the GTP hydrolysis stage on the ribosome. The sequence is that of Elongation factor Ts from Sphingopyxis alaskensis (strain DSM 13593 / LMG 18877 / RB2256) (Sphingomonas alaskensis).